The primary structure comprises 908 residues: Putative cell signaling protein HAM1 (908 aa).

2 disordered regions span residues 1-24 (MSVAATKSEISHNPGKMSVTSAVS) and 177-359 (TKAA…EHRQ). Basic and acidic residues-rich tracts occupy residues 179–192 (AADKSRPSQEKLDS), 231–247 (HPRDDPRDAQLVDDKGK), 261–283 (AKSDAQSKAQDLKSSARDYKETG), 306–321 (EQKEQVKGAAYDKRDA), and 338–359 (NQEKARGKAAALRDRIPEEHRQ). Residues 255 to 282 (YNQAQEAKSDAQSKAQDLKSSARDYKET) are a coiled coil.

In terms of processing, palmitoylated.

Functionally, may act as a negative regulator of mating during vegetative growth. The chain is Putative cell signaling protein HAM1 from Cryptococcus neoformans var. grubii serotype A (strain H99 / ATCC 208821 / CBS 10515 / FGSC 9487) (Filobasidiella neoformans var. grubii).